Consider the following 304-residue polypeptide: tRNA pseudouridine synthase B (304 aa).

Residue Asp-47 is the Nucleophile of the active site. Positions 85–105 are disordered; sequence TNTDDGEGEVTETSDARPSDD.

Belongs to the pseudouridine synthase TruB family. Type 1 subfamily.

The catalysed reaction is uridine(55) in tRNA = pseudouridine(55) in tRNA. Responsible for synthesis of pseudouridine from uracil-55 in the psi GC loop of transfer RNAs. This is tRNA pseudouridine synthase B from Dinoroseobacter shibae (strain DSM 16493 / NCIMB 14021 / DFL 12).